The primary structure comprises 308 residues: Malonate utilization transcriptional regulator (308 aa).

The 58-residue stretch at 9 to 66 (ITFRKLSVFMMFMAKGNIARTAEAMKLSSVSVHRALHTLEEGVGCPLFVHKGRNLLPL) folds into the HTH lysR-type domain. The H-T-H motif DNA-binding region spans 26-45 (IARTAEAMKLSSVSVHRALH).

The protein belongs to the LysR transcriptional regulatory family.

Its function is as follows. Transcriptional regulator of the mau genes for malonate utilization. This Klebsiella pneumoniae protein is Malonate utilization transcriptional regulator (mauR).